The following is a 223-amino-acid chain: Pyridoxine/pyridoxamine 5'-phosphate oxidase (223 aa).

Substrate-binding positions include 8–11 and Lys65; that span reads RVDY. FMN contacts are provided by residues 60–65, 75–76, Arg81, Lys82, and Gln104; these read RTVLLK and YT. Substrate contacts are provided by Tyr122, Arg126, and Ser130. FMN-binding positions include 139 to 140 and Trp188; that span reads QS. 194–196 contacts substrate; sequence RLH. Arg198 is a binding site for FMN.

This sequence belongs to the pyridoxamine 5'-phosphate oxidase family. In terms of assembly, homodimer. FMN serves as cofactor.

It catalyses the reaction pyridoxamine 5'-phosphate + O2 + H2O = pyridoxal 5'-phosphate + H2O2 + NH4(+). It carries out the reaction pyridoxine 5'-phosphate + O2 = pyridoxal 5'-phosphate + H2O2. It functions in the pathway cofactor metabolism; pyridoxal 5'-phosphate salvage; pyridoxal 5'-phosphate from pyridoxamine 5'-phosphate: step 1/1. Its pathway is cofactor metabolism; pyridoxal 5'-phosphate salvage; pyridoxal 5'-phosphate from pyridoxine 5'-phosphate: step 1/1. Functionally, catalyzes the oxidation of either pyridoxine 5'-phosphate (PNP) or pyridoxamine 5'-phosphate (PMP) into pyridoxal 5'-phosphate (PLP). This chain is Pyridoxine/pyridoxamine 5'-phosphate oxidase, found in Kineococcus radiotolerans (strain ATCC BAA-149 / DSM 14245 / SRS30216).